Reading from the N-terminus, the 258-residue chain is Imidazole glycerol phosphate synthase subunit HisF (258 aa).

Residues Asp11 and Asp130 contribute to the active site.

It belongs to the HisA/HisF family. In terms of assembly, heterodimer of HisH and HisF.

Its subcellular location is the cytoplasm. It carries out the reaction 5-[(5-phospho-1-deoxy-D-ribulos-1-ylimino)methylamino]-1-(5-phospho-beta-D-ribosyl)imidazole-4-carboxamide + L-glutamine = D-erythro-1-(imidazol-4-yl)glycerol 3-phosphate + 5-amino-1-(5-phospho-beta-D-ribosyl)imidazole-4-carboxamide + L-glutamate + H(+). The protein operates within amino-acid biosynthesis; L-histidine biosynthesis; L-histidine from 5-phospho-alpha-D-ribose 1-diphosphate: step 5/9. IGPS catalyzes the conversion of PRFAR and glutamine to IGP, AICAR and glutamate. The HisF subunit catalyzes the cyclization activity that produces IGP and AICAR from PRFAR using the ammonia provided by the HisH subunit. The sequence is that of Imidazole glycerol phosphate synthase subunit HisF from Escherichia coli O1:K1 / APEC.